The chain runs to 1816 residues: uncharacterized protein (1816 aa).

Disordered regions lie at residues 338-357 (DSSS…NNNN) and 562-605 (ELEK…IKPK). Over residues 339 to 357 (SSSSSSNNNNNNNNNNNNN) the composition is skewed to low complexity. The segment covering 562-577 (ELEKERIKKEKEDSKK) has biased composition (basic and acidic residues). Positions 581 to 603 (KQSSSSSSSSTTTTSTTTSSTIK) are enriched in low complexity. The Helicase ATP-binding domain maps to 826-999 (LDIVDKRESA…FLKKIDPNRK (174 aa)). 839 to 846 (ASTSSGKT) serves as a coordination point for ATP. The short motif at 949 to 952 (DEVH) is the DEAH box element. One can recognise a Helicase C-terminal domain in the interval 1198 to 1379 (QLDLVIERFQ…SVVSPSLCLS (182 aa)). Residues 1388–1487 (TNGSANKSNE…TTTKTPTTTS (100 aa)) are disordered. The span at 1395–1427 (SNEENKVQVKENEKEREKEKEKEKEKEKEKETI) shows a compositional bias: basic and acidic residues. Over residues 1445-1454 (NWDDDEEETA) the composition is skewed to acidic residues. A compositionally biased stretch (low complexity) spans 1456-1487 (STKTTPATTPTTTTTENTPATTTTTKTPTTTS).

This sequence belongs to the helicase family. SKI2 subfamily.

Its subcellular location is the nucleus. This is an uncharacterized protein from Dictyostelium discoideum (Social amoeba).